The sequence spans 83 residues: Protein L83L (83 aa).

Positions 1–26 (MDTSLKKNNGALEADNKNYQNYKDEP) are disordered.

It belongs to the asfivirus L83L family. As to quaternary structure, interacts with host IL1B.

The protein resides in the host cytoplasm. Its function is as follows. May subvert the host innate immune response by interacting with host IL1B and interfering with its function. This is Protein L83L from Ornithodoros (relapsing fever ticks).